A 336-amino-acid polypeptide reads, in one-letter code: MARNAPAFWQTRSLAARLLLPLSGLFLLLAAVRRQLFRLGIRRAVRLPVPVVVVGNIAVGGSGKTPVVEWLVARLRDAGFTPGIVSRGYGGKAPGAVIVPPHGDVRLFGDEPVLLARLTACPVAVGADRPAAARALLQAYPGCDVIVADDGLQHYPLARDVEIAVVDERTLGNRWLLPAGPLREGPGRLRDVDIIIAHGALSPALSSLLDGRPVFAMHLEGSEFRRLDGAGCRNAEAFRGVRVHAVAGIGRPERFFAQLTRMGLEVVPHPFPDHHPFTAADLDFAPGEPKILTSKDAVKCASFASADTWEFPVKAHIAAGAAERILEKLTHGRPTA.

58–65 (AVGGSGKT) provides a ligand contact to ATP.

This sequence belongs to the LpxK family.

The catalysed reaction is a lipid A disaccharide + ATP = a lipid IVA + ADP + H(+). It functions in the pathway glycolipid biosynthesis; lipid IV(A) biosynthesis; lipid IV(A) from (3R)-3-hydroxytetradecanoyl-[acyl-carrier-protein] and UDP-N-acetyl-alpha-D-glucosamine: step 6/6. Transfers the gamma-phosphate of ATP to the 4'-position of a tetraacyldisaccharide 1-phosphate intermediate (termed DS-1-P) to form tetraacyldisaccharide 1,4'-bis-phosphate (lipid IVA). The protein is Tetraacyldisaccharide 4'-kinase of Aromatoleum aromaticum (strain DSM 19018 / LMG 30748 / EbN1) (Azoarcus sp. (strain EbN1)).